We begin with the raw amino-acid sequence, 61 residues long: Small ribosomal subunit protein uS14 (61 aa).

Zn(2+) contacts are provided by Cys-24, Cys-27, Cys-40, and Cys-43.

It belongs to the universal ribosomal protein uS14 family. Zinc-binding uS14 subfamily. Part of the 30S ribosomal subunit. Contacts proteins S3 and S10. Zn(2+) serves as cofactor.

Its function is as follows. Binds 16S rRNA, required for the assembly of 30S particles and may also be responsible for determining the conformation of the 16S rRNA at the A site. The chain is Small ribosomal subunit protein uS14 from Nitratidesulfovibrio vulgaris (strain DSM 19637 / Miyazaki F) (Desulfovibrio vulgaris).